The following is a 165-amino-acid chain: Probable chemoreceptor glutamine deamidase CheD (165 aa).

It belongs to the CheD family.

The enzyme catalyses L-glutaminyl-[protein] + H2O = L-glutamyl-[protein] + NH4(+). In terms of biological role, probably deamidates glutamine residues to glutamate on methyl-accepting chemotaxis receptors (MCPs), playing an important role in chemotaxis. This Symbiobacterium thermophilum (strain DSM 24528 / JCM 14929 / IAM 14863 / T) protein is Probable chemoreceptor glutamine deamidase CheD.